Reading from the N-terminus, the 497-residue chain is tRNA-2-methylthio-N(6)-dimethylallyladenosine synthase (497 aa).

The MTTase N-terminal domain maps to 44–161 (KKVFVTTQGC…LPELYDQSHQ (118 aa)). [4Fe-4S] cluster-binding residues include cysteine 53, cysteine 90, cysteine 124, cysteine 205, cysteine 209, and cysteine 212. A Radical SAM core domain is found at 191-423 (RVEGFKAFVS…QKVIIDSTLA (233 aa)). Residues 426–494 (HEMVGTTTRV…PHMVKGEIEA (69 aa)) enclose the TRAM domain.

This sequence belongs to the methylthiotransferase family. MiaB subfamily. As to quaternary structure, monomer. Requires [4Fe-4S] cluster as cofactor.

Its subcellular location is the cytoplasm. The catalysed reaction is N(6)-dimethylallyladenosine(37) in tRNA + (sulfur carrier)-SH + AH2 + 2 S-adenosyl-L-methionine = 2-methylsulfanyl-N(6)-dimethylallyladenosine(37) in tRNA + (sulfur carrier)-H + 5'-deoxyadenosine + L-methionine + A + S-adenosyl-L-homocysteine + 2 H(+). Catalyzes the methylthiolation of N6-(dimethylallyl)adenosine (i(6)A), leading to the formation of 2-methylthio-N6-(dimethylallyl)adenosine (ms(2)i(6)A) at position 37 in tRNAs that read codons beginning with uridine. In Psychrobacter cryohalolentis (strain ATCC BAA-1226 / DSM 17306 / VKM B-2378 / K5), this protein is tRNA-2-methylthio-N(6)-dimethylallyladenosine synthase.